An 84-amino-acid polypeptide reads, in one-letter code: Toxin BmKaTx13 (84 aa).

A signal peptide spans 1–19; that stretch reads MNYLVMISFALLLMKGVES. The LCN-type CS-alpha/beta domain occupies 21 to 83; that stretch reads RDAYIAKPEN…VPIRVPGKCH (63 aa). 4 disulfides stabilise this stretch: Cys-31-Cys-82, Cys-35-Cys-55, Cys-41-Cys-65, and Cys-45-Cys-67. Residue Arg-84 is a propeptide, removed by a carboxypeptidase.

The protein belongs to the long (4 C-C) scorpion toxin superfamily. Sodium channel inhibitor family. Alpha subfamily. In terms of tissue distribution, expressed by the venom gland.

It localises to the secreted. Functionally, alpha toxins bind voltage-independently at site-3 of sodium channels (Nav) and inhibit the inactivation of the activated channels, thereby blocking neuronal transmission. This toxin is active against mammals. The sequence is that of Toxin BmKaTx13 from Olivierus martensii (Manchurian scorpion).